A 1662-amino-acid polypeptide reads, in one-letter code: Cortactin-binding protein 2 (1662 aa).

Disordered stretches follow at residues 1–23 (MATD…AGAA), 202–235 (KKKT…EFDT), 365–439 (IGVS…LHPG), and 453–477 (GNAN…SPTS). Residues 118 to 275 (RKMQERMSAQ…EQLKRGSDSK (158 aa)) are a coiled coil. Residues 385–395 (PSTGSTPDPTS) show a composition bias toward low complexity. Residues 404 to 421 (AAPSTAQTPGITPQNSQA) are compositionally biased toward polar residues. The residue at position 497 (Arg497) is an Asymmetric dimethylarginine. Residues 498–615 (FTGPQAGAPP…SSPQLPPKPS (118 aa)) form a disordered region. 2 stretches are compositionally biased toward polar residues: residues 516-529 (DVST…TSVK) and 582-592 (TVASPPSSLPQ). ANK repeat units follow at residues 708–738 (GRPT…DINY), 742–771 (DGHS…QVNA), 775–804 (NGFT…NINH), 808–837 (GGQT…DRSV), and 841–870 (DGWT…PAHG). The tract at residues 871–897 (NSFSEEESESGVFDLDEGEESPEGKSK) is disordered. The span at 874–891 (SEEESESGVFDLDEGEES) shows a compositional bias: acidic residues. The stretch at 911–941 (EGWTAAHIAASKGFKNCLEILCRHGGLETER) is one ANK 6 repeat. Residues 1446–1473 (KKKGESGAWRKVNTSPRRKSGRFSLPTW) are disordered. Position 1523 is a phosphoserine (Ser1523). Residues 1614–1662 (VPRSKVTQCSQNTKRSSSSSNTRQIEINNNSKEENWNLHKNEHLEKPNK) are disordered. The segment covering 1623-1637 (SQNTKRSSSSSNTRQ) has biased composition (low complexity). Positions 1644-1662 (SKEENWNLHKNEHLEKPNK) are enriched in basic and acidic residues.

In terms of assembly, interacts with CTTN/cortactin SH3 domain. Interacts with STRN, STRN4/zinedin and MOB4/phocein; this interactions mediate the association with the STRIPAK core complex and may regulate dendritic spine distribution of the STRIPAK complex in hippocampal neurons. Activation of glutamate receptors weakens the interaction with STRN and STRN4.

The protein resides in the cytoplasm. The protein localises to the cell cortex. It is found in the cell projection. Its subcellular location is the dendritic spine. Its function is as follows. Regulates the dendritic spine distribution of CTTN/cortactin in hippocampal neurons, and thus controls dendritic spinogenesis and dendritic spine maintenance. Associates with the striatin-interacting phosphatase and kinase (STRIPAK) core complex to regulate dendritic spine distribution of the STRIPAK complex in hippocampal neurons. The protein is Cortactin-binding protein 2 (CTTNBP2) of Callithrix jacchus (White-tufted-ear marmoset).